The chain runs to 358 residues: Forkhead box protein I1c (358 aa).

The segment covering 1–13 (MNSIHLPSHQRTS) has biased composition (polar residues). 2 disordered regions span residues 1–25 (MNSIHLPSHQRTSAPGLHQHRPKGA) and 191–255 (DNGN…PSGI). Positions 106 to 200 (RPPYSYSALI…DNGNFRRKRK (95 aa)) form a DNA-binding region, fork-head.

The protein resides in the nucleus. Its function is as follows. Probable transcription factor. The protein is Forkhead box protein I1c of Xenopus tropicalis (Western clawed frog).